The following is a 147-amino-acid chain: Endoribonuclease YbeY (147 aa).

The Zn(2+) site is built by H107, H111, and H117.

Belongs to the endoribonuclease YbeY family. Zn(2+) is required as a cofactor.

It localises to the cytoplasm. Functionally, single strand-specific metallo-endoribonuclease involved in late-stage 70S ribosome quality control and in maturation of the 3' terminus of the 16S rRNA. This is Endoribonuclease YbeY from Solibacter usitatus (strain Ellin6076).